An 821-amino-acid polypeptide reads, in one-letter code: Fibroblast growth factor receptor 2 (821 aa).

The signal sequence occupies residues 1–21 (MVSWGRFICLVVVTMATLSLA). The Extracellular segment spans residues 22–377 (RPSFSLVEDT…EITASPDYLE (356 aa)). The 101-residue stretch at 25–125 (FSLVEDTTLE…ETWYFMVNVT (101 aa)) folds into the Ig-like C2-type 1 domain. Residues Cys-62 and Cys-107 are joined by a disulfide bond. N-linked (GlcNAc...) asparagine glycans are attached at residues Asn-83 and Asn-123. Over residues 131–144 (GDDEDDTDGAEDFV) the composition is skewed to acidic residues. The disordered stretch occupies residues 131–151 (GDDEDDTDGAEDFVSENSNNK). 2 consecutive Ig-like C2-type domains span residues 154 to 247 (PYWT…YHLD) and 256 to 358 (PILQ…AWLT). A heparin-binding region spans residues 161-178 (KMEKRLHAVPAANTVKFR). A disulfide bridge connects residues Cys-179 and Cys-231. 6 N-linked (GlcNAc...) asparagine glycosylation sites follow: Asn-228, Asn-241, Asn-265, Asn-297, Asn-318, and Asn-331. An intrachain disulfide couples Cys-278 to Cys-342. The helical transmembrane segment at 378 to 398 (IAIYCIGVFLIACMVVTVILC) threads the bilayer. Topologically, residues 399–821 (RMKNTTKKPD…YPHINGSVKT (423 aa)) are cytoplasmic. Tyr-466 is subject to Phosphotyrosine; by autocatalysis. In terms of domain architecture, Protein kinase spans 481–770 (LTLGKPLGEG…LTLTTNEEYL (290 aa)). Residues 487 to 495 (LGEGCFGQV), Lys-517, 565 to 567 (EYA), and Asn-571 each bind ATP. Phosphotyrosine; by autocatalysis is present on residues Tyr-586 and Tyr-588. Asp-626 (proton acceptor) is an active-site residue. 3 positions are modified to phosphotyrosine; by autocatalysis: Tyr-656, Tyr-657, and Tyr-769. At Ser-780 the chain carries Phosphoserine.

Belongs to the protein kinase superfamily. Tyr protein kinase family. Fibroblast growth factor receptor subfamily. Monomer. Homodimer after ligand binding. Interacts predominantly with FGF1 and FGF2, but can also interact with FGF3, FGF4, FGF6, FGF7, FGF8, FGF9, FGF10, FGF17, FGF18 and FGF22 (in vitro). Ligand specificity is determined by tissue-specific expression of isoforms, and differences in the third Ig-like domain are crucial for ligand specificity. Isoform 1 has high affinity for FGF1 and FGF2, but low affinity for FGF7. Isoform 3 has high affinity for FGF1 and FGF7, and has much higher affinity for FGF7 than isoform 1 (in vitro). Affinity for fibroblast growth factors (FGFs) is increased by heparan sulfate glycosaminoglycans that function as coreceptors. Likewise, KLB increases the affinity for FGF19 and FGF21. Interacts with PLCG1, GRB2 and PAK4. Interacts with FLRT2. Post-translationally, autophosphorylated. Binding of FGF family members together with heparan sulfate proteoglycan or heparin promotes receptor dimerization and autophosphorylation on several tyrosine residues. Autophosphorylation occurs in trans between the two FGFR molecules present in the dimer. Phosphorylation at Tyr-769 is essential for interaction with PLCG1. N-glycosylated in the endoplasmic reticulum. The N-glycan chains undergo further maturation to an Endo H-resistant form in the Golgi apparatus. In terms of processing, ubiquitinated. FGFR2 is rapidly ubiquitinated after autophosphorylation, leading to internalization and degradation. Subject to degradation both in lysosomes and by the proteasome.

Its subcellular location is the cell membrane. It is found in the golgi apparatus. The protein localises to the cytoplasmic vesicle. The protein resides in the secreted. It catalyses the reaction L-tyrosyl-[protein] + ATP = O-phospho-L-tyrosyl-[protein] + ADP + H(+). With respect to regulation, present in an inactive conformation in the absence of bound ligand. Ligand binding leads to dimerization and activation by autophosphorylation on tyrosine residues. Inhibited by ARQ 523 and ARQ 069; these compounds maintain the kinase in an inactive conformation and inhibit autophosphorylation. Tyrosine-protein kinase that acts as a cell-surface receptor for fibroblast growth factors and plays an essential role in the regulation of cell proliferation, differentiation, migration and apoptosis, and in the regulation of embryonic development. Required for normal embryonic patterning, trophoblast function, limb bud development, lung morphogenesis, osteogenesis and skin development. Plays an essential role in the regulation of osteoblast differentiation, proliferation and apoptosis, and is required for normal skeleton development. Promotes cell proliferation in keratinocytes and immature osteoblasts, but promotes apoptosis in differentiated osteoblasts. Phosphorylates PLCG1, FRS2 and PAK4. Ligand binding leads to the activation of several signaling cascades. Activation of PLCG1 leads to the production of the cellular signaling molecules diacylglycerol and inositol 1,4,5-trisphosphate. Phosphorylation of FRS2 triggers recruitment of GRB2, GAB1, PIK3R1 and SOS1, and mediates activation of RAS, MAPK1/ERK2, MAPK3/ERK1 and the MAP kinase signaling pathway, as well as of the AKT1 signaling pathway. FGFR2 signaling is down-regulated by ubiquitination, internalization and degradation. Mutations that lead to constitutive kinase activation or impair normal FGFR2 maturation, internalization and degradation lead to aberrant signaling. Over-expressed FGFR2 promotes activation of STAT1. The polypeptide is Fibroblast growth factor receptor 2 (FGFR2) (Homo sapiens (Human)).